The sequence spans 257 residues: Ribonuclease HII (257 aa).

The RNase H type-2 domain occupies 72–257 (TYIAGIDEVG…FAPIKDMIQK (186 aa)). A divalent metal cation is bound by residues Asp-78, Glu-79, and Asp-170.

The protein belongs to the RNase HII family. Mn(2+) serves as cofactor. Requires Mg(2+) as cofactor.

The protein localises to the cytoplasm. It catalyses the reaction Endonucleolytic cleavage to 5'-phosphomonoester.. Functionally, endonuclease that specifically degrades the RNA of RNA-DNA hybrids. The polypeptide is Ribonuclease HII (Bacillus cereus (strain AH820)).